Reading from the N-terminus, the 363-residue chain is Phospho-N-acetylmuramoyl-pentapeptide-transferase (363 aa).

A run of 9 helical transmembrane segments spans residues Ile-13–Leu-33, Leu-49–Leu-69, Met-95–Ala-115, Leu-119–Ile-139, Leu-154–Ser-174, Trp-183–Val-203, Ala-224–Phe-244, Ala-281–Val-301, and Glu-343–Ala-363.

This sequence belongs to the glycosyltransferase 4 family. MraY subfamily. The cofactor is Mg(2+).

It localises to the cell inner membrane. The catalysed reaction is UDP-N-acetyl-alpha-D-muramoyl-L-alanyl-gamma-D-glutamyl-meso-2,6-diaminopimeloyl-D-alanyl-D-alanine + di-trans,octa-cis-undecaprenyl phosphate = di-trans,octa-cis-undecaprenyl diphospho-N-acetyl-alpha-D-muramoyl-L-alanyl-D-glutamyl-meso-2,6-diaminopimeloyl-D-alanyl-D-alanine + UMP. It functions in the pathway cell wall biogenesis; peptidoglycan biosynthesis. Catalyzes the initial step of the lipid cycle reactions in the biosynthesis of the cell wall peptidoglycan: transfers peptidoglycan precursor phospho-MurNAc-pentapeptide from UDP-MurNAc-pentapeptide onto the lipid carrier undecaprenyl phosphate, yielding undecaprenyl-pyrophosphoryl-MurNAc-pentapeptide, known as lipid I. This is Phospho-N-acetylmuramoyl-pentapeptide-transferase from Nostoc punctiforme (strain ATCC 29133 / PCC 73102).